The following is a 236-amino-acid chain: Putative protein ZBED10P (236 aa).

The chain is Putative protein ZBED10P from Homo sapiens (Human).